A 78-amino-acid polypeptide reads, in one-letter code: D-alanyl carrier protein (78 aa).

In terms of domain architecture, Carrier spans 1-78; the sequence is MAFRENVLEI…MIITQLEALK (78 aa). Ser-36 bears the O-(pantetheine 4'-phosphoryl)serine mark.

Belongs to the DltC family. Post-translationally, 4'-phosphopantetheine is transferred from CoA to a specific serine of apo-DCP.

It localises to the cytoplasm. Its pathway is cell wall biogenesis; lipoteichoic acid biosynthesis. Carrier protein involved in the D-alanylation of lipoteichoic acid (LTA). The loading of thioester-linked D-alanine onto DltC is catalyzed by D-alanine--D-alanyl carrier protein ligase DltA. The DltC-carried D-alanyl group is further transferred to cell membrane phosphatidylglycerol (PG) by forming an ester bond, probably catalyzed by DltD. D-alanylation of LTA plays an important role in modulating the properties of the cell wall in Gram-positive bacteria, influencing the net charge of the cell wall. This Listeria monocytogenes serotype 4b (strain CLIP80459) protein is D-alanyl carrier protein.